The sequence spans 523 residues: MTNIHHHKILILDFGSQYTQLIARRVREIGVYCELWAWDVTEEQIREFNPTGIILSGGPESTTEANSPRATEYVFNAGVPVLGICYGMQTMAMQLGGLTETSTHREFGYAEVSLQNPTALFADLNDDLTACDPKLDVWMSHGDKVTRLPDNFQITGMTSTCPIAAMSDESRRFYCVQFHPEVTHTKCGQKLLQNFVVDICGCETNWTAENIIEDAVARIKAQVGDDEVILGLSGGVDSSVTALLLHRAIGKNLHCVFVDNGLLRLNEGDQVMEMFGDKFGLNIIRVEAEDRFLEALKGIDEPEAKRKTIGKVFVDVFDDEAKKLTDVKWLAQGTIYPDVIESAASKTGKAHVIKSHHNVGGLPDYMKLGLVEPLRELFKDEVRKIGLALGLPAEMLNRHPFPGPGLGVRVLGEIKKEYCDLLRKADAIFIEELHKADWYYKVSQAFGVFLPVKSVGVMGDGRKYDWVISLRAVETIDFMTAHWANLPYDLLGKISNRIINEVNGISRVVYDISGKPPATIEWE.

The Glutamine amidotransferase type-1 domain maps to 8–205; sequence KILILDFGSQ…VVDICGCETN (198 aa). Cys85 serves as the catalytic Nucleophile. Active-site residues include His179 and Glu181. In terms of domain architecture, GMPS ATP-PPase spans 206–398; the sequence is WTAENIIEDA…LGLPAEMLNR (193 aa). 233-239 provides a ligand contact to ATP; the sequence is SGGVDSS.

As to quaternary structure, homodimer.

It carries out the reaction XMP + L-glutamine + ATP + H2O = GMP + L-glutamate + AMP + diphosphate + 2 H(+). It participates in purine metabolism; GMP biosynthesis; GMP from XMP (L-Gln route): step 1/1. In terms of biological role, catalyzes the synthesis of GMP from XMP. This is GMP synthase [glutamine-hydrolyzing] from Histophilus somni (strain 2336) (Haemophilus somnus).